The chain runs to 478 residues: Lipoprotein lipase (478 aa).

The first 28 residues, methionine 1–alanine 28, serve as a signal peptide directing secretion. The segment at lysine 35 to threonine 56 is interaction with GPIHBP1. An intrachain disulfide couples cysteine 57 to cysteine 70. Asparagine 73 carries N-linked (GlcNAc...) asparagine glycosylation. At tyrosine 124 the chain carries 3'-nitrotyrosine. Catalysis depends on serine 162, which acts as the Nucleophile. The active-site Charge relay system is the aspartate 186. Tyrosine 194 carries the post-translational modification 3'-nitrotyrosine. Ca(2+) is bound by residues alanine 197, arginine 200, serine 202, and aspartate 205. A disulfide bridge connects residues cysteine 246 and cysteine 269. An essential for determining substrate specificity region spans residues cysteine 246 to cysteine 269. Catalysis depends on histidine 271, which acts as the Charge relay system. N-linked (GlcNAc...) asparagine glycosylation occurs at asparagine 287. 2 disulfides stabilise this stretch: cysteine 294-cysteine 313 and cysteine 305-cysteine 308. The region spanning phenylalanine 344–lysine 467 is the PLAT domain. Tyrosine 346 is modified (3'-nitrotyrosine). Asparagine 389 carries N-linked (GlcNAc...) asparagine glycosylation. The tract at residues tryptophan 420 to tryptophan 424 is important for interaction with lipoprotein particles. An important for heparin binding region spans residues lysine 433–lysine 437. The tract at residues isoleucine 446–aspartate 470 is interaction with GPIHBP1. Cysteines 448 and 468 form a disulfide.

This sequence belongs to the AB hydrolase superfamily. Lipase family. As to quaternary structure, homodimer. Interacts with GPIHBP1 with 1:1 stoichiometry. Interacts with APOC2; the interaction activates LPL activity in the presence of lipids. Interaction with heparan sulfate proteoglycans is required to protect LPL against loss of activity. Associates with lipoprotein particles in blood plasma. Interacts with LMF1 and SEL1L; interaction with SEL1L is required to prevent aggregation of newly synthesized LPL in the endoplasmic reticulum (ER), and for normal export of LPL from the ER to the extracellular space. Interacts with SORL1; SORL1 acts as a sorting receptor, promoting LPL localization to endosomes and later to lysosomes, leading to degradation of newly synthesized LPL. Tyrosine nitration after lipopolysaccharide (LPS) challenge down-regulates the lipase activity. As to expression, detected in milk (at protein level).

It is found in the cell membrane. Its subcellular location is the secreted. It localises to the extracellular space. The protein resides in the extracellular matrix. It catalyses the reaction a triacylglycerol + H2O = a diacylglycerol + a fatty acid + H(+). The catalysed reaction is a 1,2-diacyl-sn-glycero-3-phosphocholine + H2O = a 2-acyl-sn-glycero-3-phosphocholine + a fatty acid + H(+). It carries out the reaction 1,2,3-tri-(9Z-octadecenoyl)-glycerol + H2O = di-(9Z)-octadecenoylglycerol + (9Z)-octadecenoate + H(+). The enzyme catalyses 1,2-di-(9Z-octadecenoyl)-sn-glycero-3-phosphocholine + H2O = (9Z-octadecenoyl)-sn-glycero-3-phosphocholine + (9Z)-octadecenoate + H(+). It catalyses the reaction 1,2,3-tributanoylglycerol + H2O = dibutanoylglycerol + butanoate + H(+). The catalysed reaction is 1,2-dihexadecanoyl-sn-glycero-3-phosphocholine + H2O = hexadecanoyl-sn-glycero-3-phosphocholine + hexadecanoate + H(+). Its activity is regulated as follows. The apolipoprotein APOC2 acts as a coactivator of LPL activity. Ca(2+) binding promotes protein stability and formation of the active homodimer. Interaction with GPIHBP1 protects LPL against inactivation by ANGPTL4. Functionally, key enzyme in triglyceride metabolism. Catalyzes the hydrolysis of triglycerides from circulating chylomicrons and very low density lipoproteins (VLDL), and thereby plays an important role in lipid clearance from the blood stream, lipid utilization and storage. Although it has both phospholipase and triglyceride lipase activities it is primarily a triglyceride lipase with low but detectable phospholipase activity. Mediates margination of triglyceride-rich lipoprotein particles in capillaries. Recruited to its site of action on the luminal surface of vascular endothelium by binding to GPIHBP1 and cell surface heparan sulfate proteoglycans. This Bos taurus (Bovine) protein is Lipoprotein lipase (LPL).